The sequence spans 430 residues: C4-dicarboxylate transport protein (430 aa).

A run of 8 helical transmembrane segments spans residues 9 to 29, 45 to 65, 79 to 99, 149 to 169, 185 to 205, 223 to 243, 308 to 328, and 356 to 376; these read VLYV…HFYP, LIKM…IAGM, LLYF…ATHL, GEIL…AHLG, VLFG…FGAM, LIGT…GAIA, IYMT…LTWM, and AATL…ILGI.

The protein belongs to the dicarboxylate/amino acid:cation symporter (DAACS) (TC 2.A.23) family.

The protein resides in the cell inner membrane. In terms of biological role, responsible for the transport of dicarboxylates such as succinate, fumarate, and malate from the periplasm across the membrane. This chain is C4-dicarboxylate transport protein, found in Burkholderia orbicola (strain AU 1054).